Reading from the N-terminus, the 615-residue chain is 1-deoxy-D-xylulose-5-phosphate synthase (615 aa).

Thiamine diphosphate contacts are provided by residues His72 and 113-115; that span reads GHA. Asp144 contacts Mg(2+). Residues 145–146, Asn173, Tyr281, and Glu360 each bind thiamine diphosphate; that span reads GA. Asn173 is a Mg(2+) binding site.

This sequence belongs to the transketolase family. DXPS subfamily. As to quaternary structure, homodimer. It depends on Mg(2+) as a cofactor. Thiamine diphosphate is required as a cofactor.

It carries out the reaction D-glyceraldehyde 3-phosphate + pyruvate + H(+) = 1-deoxy-D-xylulose 5-phosphate + CO2. It participates in metabolic intermediate biosynthesis; 1-deoxy-D-xylulose 5-phosphate biosynthesis; 1-deoxy-D-xylulose 5-phosphate from D-glyceraldehyde 3-phosphate and pyruvate: step 1/1. In terms of biological role, catalyzes the acyloin condensation reaction between C atoms 2 and 3 of pyruvate and glyceraldehyde 3-phosphate to yield 1-deoxy-D-xylulose-5-phosphate (DXP). This is 1-deoxy-D-xylulose-5-phosphate synthase from Thermus thermophilus (strain ATCC 27634 / DSM 579 / HB8).